The primary structure comprises 162 residues: MTRQAVPKPAYEDLVDCQSAMFEWAESFDSKDWDRLSACLAPTLFLDYSDIMGKKWDALPVEEFIGMASSPHFLGNARIKTQHFIGASKWTQPDEGQIVGFHQMRVAHQKYGDDELKQVLYHGHAHGKATTYYRNVGGQWKFAGLVPDVRWTEFDCDKIFEH.

Y48 contributes to the substrate binding site. Active-site residues include H83 and H108.

This sequence belongs to the scytalone dehydratase family.

Its pathway is pigment biosynthesis. In terms of biological role, scytalone dehydratase-like protein; part of the gene cluster that mediates the biosynthesis of the bianthraquinone cladofulvin, a conidial pigment not required for virulence but that plays a role in fitness and resistance to environmental stresses including UV light and low-temperature stress. The pathway begins with the synthesis of atrochrysone thioester by the polyketide synthase (PKS) claG. The atrochrysone carboxyl ACP thioesterase claF then breaks the thioester bond and releases the atrochrysone carboxylic acid from claG. This compound is decarboxylated by claH to yield emodin, which is further converted to chrysophanol hydroquinone by the reductase claC and the dehydratase claB. The cytochrome P450 monooxygenase claM then catalyzes the dimerization of nataloe-emodin to cladofulvin. The polypeptide is Scytalone dehydratase-like protein claB (Passalora fulva (Tomato leaf mold)).